The following is a 228-amino-acid chain: MFDFGLGELVFVGIIALIVLGPERLPEAARTAGRLIGRLQRFVGSVKQEFDTQIELEELRKAKQEFEAAAAQVRDSLKETGTDMEGNLHDISDGLKPWEKLPEQRTPADFGVDENGNPFPDAANTLLDGISDVMPSERSYASAETLGDSGQTGSTAEPAETDQDRAWREYLTASAAAPVVQTVEVSYIDTAVETPVPHTTSLRKQAISRKRDLRPKSRAKPKLRVRKS.

Residues methionine 1–glycine 21 traverse the membrane as a helical segment. Disordered stretches follow at residues arginine 138–aspartate 162 and proline 195–serine 228. Positions alanine 206–serine 228 are enriched in basic residues.

This sequence belongs to the TatB family. As to quaternary structure, the Tat system comprises two distinct complexes: a TatABC complex, containing multiple copies of TatA, TatB and TatC subunits, and a separate TatA complex, containing only TatA subunits. Substrates initially bind to the TatABC complex, which probably triggers association of the separate TatA complex to form the active translocon.

The protein localises to the cell inner membrane. Part of the twin-arginine translocation (Tat) system that transports large folded proteins containing a characteristic twin-arginine motif in their signal peptide across membranes. Together with TatC, TatB is part of a receptor directly interacting with Tat signal peptides. TatB may form an oligomeric binding site that transiently accommodates folded Tat precursor proteins before their translocation. This chain is Sec-independent protein translocase protein TatB, found in Neisseria meningitidis serogroup A / serotype 4A (strain DSM 15465 / Z2491).